The following is a 171-amino-acid chain: ATP synthase subunit b (171 aa).

A helical transmembrane segment spans residues 32–52; the sequence is FFAVLLIFLIVLGVIAKWVVP.

It belongs to the ATPase B chain family. In terms of assembly, F-type ATPases have 2 components, F(1) - the catalytic core - and F(0) - the membrane proton channel. F(1) has five subunits: alpha(3), beta(3), gamma(1), delta(1), epsilon(1). F(0) has three main subunits: a(1), b(2) and c(10-14). The alpha and beta chains form an alternating ring which encloses part of the gamma chain. F(1) is attached to F(0) by a central stalk formed by the gamma and epsilon chains, while a peripheral stalk is formed by the delta and b chains.

The protein localises to the cell membrane. F(1)F(0) ATP synthase produces ATP from ADP in the presence of a proton or sodium gradient. F-type ATPases consist of two structural domains, F(1) containing the extramembraneous catalytic core and F(0) containing the membrane proton channel, linked together by a central stalk and a peripheral stalk. During catalysis, ATP synthesis in the catalytic domain of F(1) is coupled via a rotary mechanism of the central stalk subunits to proton translocation. Its function is as follows. Component of the F(0) channel, it forms part of the peripheral stalk, linking F(1) to F(0). The protein is ATP synthase subunit b of Mycolicibacterium gilvum (strain PYR-GCK) (Mycobacterium gilvum (strain PYR-GCK)).